The following is a 325-amino-acid chain: Fructose-1,6-bisphosphatase class 1 (325 aa).

Mg(2+) is bound by residues Glu-84, Asp-103, Leu-105, and Asp-106. Residues 106-109, Asn-196, and Lys-262 each bind substrate; that span reads DGSS. Glu-268 is a Mg(2+) binding site.

The protein belongs to the FBPase class 1 family. As to quaternary structure, homotetramer. Mg(2+) serves as cofactor.

It is found in the cytoplasm. The enzyme catalyses beta-D-fructose 1,6-bisphosphate + H2O = beta-D-fructose 6-phosphate + phosphate. Its pathway is carbohydrate biosynthesis; gluconeogenesis. In Shewanella baltica (strain OS195), this protein is Fructose-1,6-bisphosphatase class 1.